Consider the following 153-residue polypeptide: Ribonuclease 2 (153 aa).

The protein belongs to the BetVI family.

The protein resides in the cytoplasm. Its function is as follows. Catalyzes the two-stage endonucleolytic cleavage to 3'-phosphomononucleotides and 3'-phosphooligonucleotides with 2',3'-cyclic phosphate intermediates. This chain is Ribonuclease 2, found in Panax ginseng (Korean ginseng).